We begin with the raw amino-acid sequence, 443 residues long: Xaa-Pro dipeptidase (443 aa).

Mn(2+) contacts are provided by aspartate 241, aspartate 252, histidine 333, glutamate 378, and glutamate 417.

It belongs to the peptidase M24B family. Bacterial-type prolidase subfamily. It depends on Mn(2+) as a cofactor.

It carries out the reaction Xaa-L-Pro dipeptide + H2O = an L-alpha-amino acid + L-proline. Splits dipeptides with a prolyl residue in the C-terminal position. The chain is Xaa-Pro dipeptidase from Actinobacillus pleuropneumoniae serotype 5b (strain L20).